The sequence spans 85 residues: UPF0512 protein U (85 aa).

The protein belongs to the UPF0512 family.

This chain is UPF0512 protein U, found in Dictyostelium discoideum (Social amoeba).